A 176-amino-acid chain; its full sequence is RNA pyrophosphohydrolase (176 aa).

Positions 6–149 (GYRPNVGIVI…KRDVYRRVMK (144 aa)) constitute a Nudix hydrolase domain. The Nudix box signature appears at 38 to 59 (GGINPGESAEQAMYRELFEEVG).

The protein belongs to the Nudix hydrolase family. RppH subfamily. Requires a divalent metal cation as cofactor.

Its function is as follows. Accelerates the degradation of transcripts by removing pyrophosphate from the 5'-end of triphosphorylated RNA, leading to a more labile monophosphorylated state that can stimulate subsequent ribonuclease cleavage. This chain is RNA pyrophosphohydrolase, found in Klebsiella pneumoniae (strain 342).